The following is an 872-amino-acid chain: Serine/threonine-protein phosphatase 1 regulatory subunit 10 (872 aa).

The interaction with TOX4 stretch occupies residues 1-348; it reads MGSGPIDPKE…EPAAPAEPMD (348 aa). Residues 73 to 147 form the TFIIS N-terminal domain; it reads KLLNSWLTYS…SDWMAVIRSQ (75 aa). 4 disordered regions span residues 147–213, 247–270, 307–398, and 534–837; these read QSST…STGL, SATAAPGDAAPPAEKKYKPLNTTP, KKKK…KRKT, and VETL…HGGD. Basic and acidic residues-rich tracts occupy residues 153–166 and 174–196; these read AEKDKKKRKEEGKS and PLTEVKAETRAEEAPEKKKEKPK. Residue K179 forms a Glycyl lysine isopeptide (Lys-Gly) (interchain with G-Cter in SUMO2) linkage. A compositionally biased stretch (low complexity) spans 248–258; the sequence is ATAAPGDAAPP. K262 participates in a covalent cross-link: Glycyl lysine isopeptide (Lys-Gly) (interchain with G-Cter in SUMO2). The residue at position 313 (S313) is a Phosphoserine. Low complexity predominate over residues 325-336; sequence KTSTEPSTAKPS. A necessary for interaction with PPP1CA region spans residues 357–433; it reads PAVEVPELMD…NKIKDFGEAA (77 aa). S382 carries the phosphoserine modification. The necessary for interaction with PPP1CC stretch occupies residues 393–408; that stretch reads GRKRKTVTWPEEGKLR. Positions 394–423 match the PP1-binding motif motif; the sequence is RKRKTVTWPEEGKLREYFYFELDETERVNV. T398 is modified (phosphothreonine; by PKA). The tract at residues 418 to 619 is interaction with WDR82; it reads TERVNVNKIK…LKQMLVPHGL (202 aa). Residues 540-551 show a composition bias toward gly residues; sequence GGSGGSPDGAGG. A phosphoserine mark is found at S545 and S591. Positions 583-595 are enriched in polar residues; the sequence is EILTSIMGSPNNH. Basic and acidic residues predominate over residues 596-611; that stretch reads PSEELLKQPDYSDKLK. A compositionally biased stretch (pro residues) spans 644–655; sequence PPGPGGPMPGPH. Position 665 is an omega-N-methylarginine (R665). Residues 674–690 show a composition bias toward low complexity; the sequence is RGGDPFWDGPGDPMRGG. Omega-N-methylarginine is present on residues R693 and R737. A compositionally biased stretch (gly residues) spans 724–762; sequence ARGGRSGGGPPNGRGGPGGGGMVGGGGHRPHEGPGGSMG. Positions 795–835 are enriched in basic and acidic residues; the sequence is PHDVPSHRGHDHRGPPPHEHRGHDGHGGGGHRGHDGGHSHG. A C3H1-type zinc finger spans residues 838 to 866; it reads MSNRPVCRHFMMKGNCRYENNCAFYHPGV.

In terms of assembly, component of the PNUTS-PP1 complex (also named PTW/PP1 complex), composed of PPP1R10/PNUTS, TOX4, WDR82, and PPP1CA (or PPP1CB or PPP1CC). Phosphorylated on Thr-398 by PKA within the region necessary for interaction with PPP1CA. As to expression, expressed in testis, brain and intestine (at protein level). Highly expressed in testis.

The protein localises to the nucleus. Its subcellular location is the chromosome. Substrate-recognition component of the PNUTS-PP1 protein phosphatase complex, a protein phosphatase 1 (PP1) complex that promotes RNA polymerase II transcription pause-release, allowing transcription elongation. Promoter-proximal pausing by RNA polymerase II is a transcription halt following transcription initiation but prior to elongation, which acts as a checkpoint to control that transcripts are favorably configured for transcriptional elongation. The PNUTS-PP1 complex mediates the release of RNA polymerase II from promoter-proximal region of genes by catalyzing dephosphorylation of proteins involved in transcription, such as AFF4, CDK9, MEPCE, INTS12, NCBP1, POLR2M/GDOWN1 and SUPT6H. The PNUTS-PP1 complex also regulates RNA polymerase II transcription termination by mediating dephosphorylation of SUPT5H in termination zones downstream of poly(A) sites, thereby promoting deceleration of RNA polymerase II transcription. PNUTS-PP1 complex is also involved in the response to replication stress by mediating dephosphorylation of POLR2A at 'Ser-5' of the CTD, promoting RNA polymerase II degradation. The PNUTS-PP1 complex also plays a role in the control of chromatin structure and cell cycle progression during the transition from mitosis into interphase. PNUTS-PP1 complex mediates dephosphorylation of MYC, promoting MYC stability by preventing MYC ubiquitination by the SCF(FBXW7) complex. In addition to acts as a substrate-recognition component, PPP1R10/PNUTS also acts as a nuclear targeting subunit for the PNUTS-PP1 complex. In some context, PPP1R10/PNUTS also acts as an inhibitor of protein phosphatase 1 (PP1) activity by preventing access to substrates. The chain is Serine/threonine-protein phosphatase 1 regulatory subunit 10 from Rattus norvegicus (Rat).